The following is a 286-amino-acid chain: Thymidylate synthase (286 aa).

Arg27 is a binding site for dUMP. A (6R)-5,10-methylene-5,6,7,8-tetrahydrofolate-binding site is contributed by His57. Residue 148-149 coordinates dUMP; it reads RR. Cys168 serves as the catalytic Nucleophile. DUMP-binding positions include 188 to 191, Asn199, and 229 to 231; these read RSAD and HLY. A (6R)-5,10-methylene-5,6,7,8-tetrahydrofolate-binding site is contributed by Asp191. Ala285 serves as a coordination point for (6R)-5,10-methylene-5,6,7,8-tetrahydrofolate.

It belongs to the thymidylate synthase family. Bacterial-type ThyA subfamily. Homodimer.

The protein resides in the cytoplasm. The enzyme catalyses dUMP + (6R)-5,10-methylene-5,6,7,8-tetrahydrofolate = 7,8-dihydrofolate + dTMP. The protein operates within pyrimidine metabolism; dTTP biosynthesis. In terms of biological role, catalyzes the reductive methylation of 2'-deoxyuridine-5'-monophosphate (dUMP) to 2'-deoxythymidine-5'-monophosphate (dTMP) while utilizing 5,10-methylenetetrahydrofolate (mTHF) as the methyl donor and reductant in the reaction, yielding dihydrofolate (DHF) as a by-product. This enzymatic reaction provides an intracellular de novo source of dTMP, an essential precursor for DNA biosynthesis. This chain is Thymidylate synthase, found in Psychrobacter sp. (strain PRwf-1).